The primary structure comprises 201 residues: MTLVSQIEAILFVVGEEGIGLEELAYLLEKSTAKTYEELTKLKEHYASDNKSALNILEVGNHFVLTTKKKYASLLKKYAQSPMSNALSQAALETLSIIAYKQPISRIEIDEIRGVQTSGSIQKLVARQLIEEKGRVDGPGRAILYGTTKYFMDYFGLKSLDELPDIQQMEDELEEELPMDLFFDRYQETNPMSETTEGEEA.

This sequence belongs to the ScpB family. As to quaternary structure, homodimer. Homodimerization may be required to stabilize the binding of ScpA to the Smc head domains. Component of a cohesin-like complex composed of ScpA, ScpB and the Smc homodimer, in which ScpA and ScpB bind to the head domain of Smc. The presence of the three proteins is required for the association of the complex with DNA.

The protein resides in the cytoplasm. Its function is as follows. Participates in chromosomal partition during cell division. May act via the formation of a condensin-like complex containing Smc and ScpA that pull DNA away from mid-cell into both cell halves. In Enterococcus faecalis (strain ATCC 700802 / V583), this protein is Segregation and condensation protein B.